We begin with the raw amino-acid sequence, 504 residues long: Histidine--tRNA ligase (504 aa).

This sequence belongs to the class-II aminoacyl-tRNA synthetase family. In terms of assembly, homodimer.

It localises to the cytoplasm. The catalysed reaction is tRNA(His) + L-histidine + ATP = L-histidyl-tRNA(His) + AMP + diphosphate + H(+). The chain is Histidine--tRNA ligase (hisS) from Rhizobium meliloti (strain 1021) (Ensifer meliloti).